A 1048-amino-acid chain; its full sequence is Integrin alpha-V (1048 aa).

The N-terminal stretch at 1–30 is a signal peptide; that stretch reads MAFPPRRRLRLGPRGLPLLLSGLLLPLCRA. The Extracellular portion of the chain corresponds to 31–992; that stretch reads FNLDVESPAE…WGIQPAPMPV (962 aa). FG-GAP repeat units follow at residues 32 to 98, 109 to 170, 173 to 225, 237 to 291, 292 to 357, 358 to 415, and 419 to 482; these read NLDV…RRCQ, DYAK…VEYA, RSKN…VSKY, QLAT…GKNM, SSLH…GDFQ, TIKL…GLNA, and QILE…VYPS. An N-linked (GlcNAc...) asparagine glycan is attached at N74. 3 cysteine pairs are disulfide-bonded: C89/C97, C138/C158, and C172/C185. Positions 260, 262, 264, 266, and 268 each coordinate Ca(2+). N290 and N296 each carry an N-linked (GlcNAc...) asparagine glycan. D314, N316, D318, Y320, D322, D379, D381, D383, F385, D387, D443, D445, N447, Y449, and D451 together coordinate Ca(2+). A glycan (N-linked (GlcNAc...) asparagine) is linked at N488. Intrachain disulfides connect C491–C502 and C508–C565. N-linked (GlcNAc...) asparagine glycosylation is found at N554 and N615. Cystine bridges form between C626/C632 and C698/C711. 4 N-linked (GlcNAc...) asparagine glycosylation sites follow: N704, N835, N851, and N874. 2 cysteine pairs are disulfide-bonded: C852–C914 and C904–C909. Residues N945, N973, and N980 are each glycosylated (N-linked (GlcNAc...) asparagine). A helical transmembrane segment spans residues 993–1016; that stretch reads PVWVIILAVLAGLLLLAVLVFVMY. Residues 1017–1048 lie on the Cytoplasmic side of the membrane; it reads RMGFFKRVRPPQEEQEREQLQPHENGEGNSET. Residues 1019-1023 carry the GFFKR motif motif; it reads GFFKR. Basic and acidic residues predominate over residues 1027–1042; sequence PQEEQEREQLQPHENG. A disordered region spans residues 1027 to 1048; it reads PQEEQEREQLQPHENGEGNSET.

Belongs to the integrin alpha chain family. In terms of assembly, heterodimer of an alpha and a beta subunit. The alpha subunit is composed of a heavy and a light chain linked by a disulfide bond. Alpha-V (ITGAV) associates with either beta-1 (ITGB1), beta-3 (ITGB3), beta-5 (ITGB5), beta-6 (ITGB6) or beta-8 (ITGB8). Interacts with RAB25. Interacts with CIB1. Integrins ITGAV:ITGB3 and ITGAV:ITGB5 interact with FBLN5 (via N-terminus). ITGAV:ITGB3 and ITGAV:ITGB5 interact with CCN3. ITGAV:ITGB3 interacts with ADGRA2. ITGAV:ITGB3 interacts with FGF2; it is likely that FGF2 can simultaneously bind ITGAV:ITGB3 and FGF receptors. ITGAV:ITGB3 interacts with SELP (via C-type lectin domain); the interaction mediates cell-cell interaction and adhesion. ITGAV:ITGB3 is found in a ternary complex with CX3CR1 and CX3CL1. ITGAV:ITGB3 is found in a ternary complex with NRG1 and ERBB3. ITGAV:ITGB3 is found in a ternary complex with FGF1 and FGFR1. ITGAV:ITGB3 is found in a ternary complex with IGF1 and IGF1R. ITGAV:ITGB3 interacts with IGF2. ITGAV:ITGB3 and ITGAV:ITGB6 interact with FBN1. ITGAV:ITGB3 interacts with CD9, CD81 and CD151 (via second extracellular domain). ITGAV:ITGB6 interacts with TGFB1. ITGAV:ITGB3 interacts with PTN. Forms a complex with PTPRZ1 and PTN that stimulates endothelial cell migration through ITGB3 'Tyr-773' phosphorylation. Interacts with TM4SF19. As to quaternary structure, (Microbial infection) Alpha-V/beta-6 and alpha-V/beta-3 bind to foot-and-mouth disease virus (FMDV) VP1 protein and acts as a receptor for this virus.

It localises to the cell membrane. The protein resides in the cell junction. It is found in the focal adhesion. In terms of biological role, the alpha-V (ITGAV) integrins are receptors for vitronectin, cytotactin, fibronectin, fibrinogen, laminin, matrix metalloproteinase-2, osteopontin, osteomodulin, prothrombin, thrombospondin, TGFB1 and vWF. They recognize the sequence R-G-D in a wide array of ligands. Alpha-V integrins may play a role in embryo implantation, angiogenesis and wound healing. ITGAV:ITGB3 binds to fractalkine (CX3CL1) and may act as its coreceptor in CX3CR1-dependent fractalkine signaling. ITGAV:ITGB3 binds to NRG1 (via EGF domain) and this binding is essential for NRG1-ERBB signaling. ITGAV:ITGB3 binds to FGF1 and this binding is essential for FGF1 signaling. ITGAV:ITGB3 binds to FGF2 and this binding is essential for FGF2 signaling. ITGAV:ITGB3 binds to IGF1 and this binding is essential for IGF1 signaling. ITGAV:ITGB3 binds to IGF2 and this binding is essential for IGF2 signaling. ITGAV:ITGB3 binds to IL1B and this binding is essential for IL1B signaling. ITGAV:ITGB3 binds to PLA2G2A via a site (site 2) which is distinct from the classical ligand-binding site (site 1) and this induces integrin conformational changes and enhanced ligand binding to site 1. ITGAV:ITGB3 and ITGAV:ITGB6 act as receptors for fibrillin-1 (FBN1) and mediate R-G-D-dependent cell adhesion to FBN1. Integrin alpha-V/beta-6 or alpha-V/beta-8 (ITGAV:ITGB6 or ITGAV:ITGB8) mediates R-G-D-dependent release of transforming growth factor beta-1 (TGF-beta-1) from regulatory Latency-associated peptide (LAP), thereby playing a key role in TGF-beta-1 activation. ITGAV:ITGB3 acts as a receptor for CD40LG. ITGAV:ITGB3 acts as a receptor for IBSP and promotes cell adhesion and migration to IBSP. The sequence is that of Integrin alpha-V (ITGAV) from Bos taurus (Bovine).